Here is a 455-residue protein sequence, read N- to C-terminus: MTSKSLNVAFIHPDLGIGGAERLVVDAAVGIQKKGHQVIFYTSHHDPNHCFEETRDGTLKVQVRGDWLPRTIFGRFYILCAILRQFVLVASLILWERHSYDIFFVDQLSACVPLLKWFTTAKILFYCHFPDKLLTQRNSTIKKLYRAPVDKMEELTTGMSDLIAVNSGFTAGMFKKSFPSVHQTPQILYPPINFDAYDRPVDRNDPTVKILETDKRVLLSINRFERKKNVELALRAFAALKIKNMVPKDVFANYRLVLAGGYDKRVRENVEYLEELDQLATEEFGLQTFTIHPSSAAADVPADAQVVFLCSFNDAQRTFLLDQAKLLLYTPSNEHFGITPVEGMYASVPVIAVNTGGPVETVKNKETGLLLPSDPDVWAEGIRDFIIEKYNGKQMGQHGRQHVQSKFSLPAFADRLEAMMIELETSTPDQSSSGAVYLLGAIGVLFACIIYCIKQ.

A helical membrane pass occupies residues 73-95; sequence FGRFYILCAILRQFVLVASLILW. N138 is a glycosylation site (N-linked (GlcNAc...) asparagine). The helical transmembrane segment at 434–453 threads the bilayer; that stretch reads GAVYLLGAIGVLFACIIYCI.

The protein belongs to the glycosyltransferase group 1 family. Glycosyltransferase 4 subfamily.

It localises to the endoplasmic reticulum membrane. The catalysed reaction is a beta-D-Man-(1-&gt;4)-beta-D-GlcNAc-(1-&gt;4)-alpha-D-GlcNAc-diphospho-di-trans,poly-cis-dolichol + GDP-alpha-D-mannose = an alpha-D-Man-(1-&gt;3)-beta-D-Man-(1-&gt;4)-beta-D-GlcNAc-(1-&gt;4)-alpha-D-GlcNAc-diphospho-di-trans,poly-cis-dolichol + GDP + H(+). It catalyses the reaction an alpha-D-Man-(1-&gt;3)-beta-D-Man-(1-&gt;4)-beta-D-GlcNAc-(1-&gt;4)-alpha-D-GlcNAc-diphospho-di-trans,poly-cis-dolichol + GDP-alpha-D-mannose = an alpha-D-Man-(1-&gt;3)-[alpha-D-Man-(1-&gt;6)]-beta-D-Man-(1-&gt;4)-beta-D-GlcNAc-(1-&gt;4)-alpha-D-GlcNAc-diphospho-di-trans,poly-cis-dolichol + GDP + H(+). Its pathway is protein modification; protein glycosylation. Mannosylates Man(2)GlcNAc(2)-dolichol diphosphate and Man(1)GlcNAc(2)-dolichol diphosphate to form Man(3)GlcNAc(2)-dolichol diphosphate. The chain is Alpha-1,3/1,6-mannosyltransferase ALG2 (ALG2) from Rhizomucor pusillus.